Reading from the N-terminus, the 227-residue chain is Cytochrome c oxidase subunit 2 (227 aa).

Residues 1–14 are Mitochondrial intermembrane-facing; sequence MAHPMQLGFQDAAS. A helical transmembrane segment spans residues 15 to 45; it reads PIMEELLYFHDHTLMIVFMISSLVLYIISLM. Residues 46–59 lie on the Mitochondrial matrix side of the membrane; it reads LSTELTHTSTMDAQ. A helical transmembrane segment spans residues 60 to 87; the sequence is EVETVWTILPAVILILIALPSLRILYMM. Over 88 to 227 the chain is Mitochondrial intermembrane; the sequence is DEINTPSMTL…YFEEWLLKSL (140 aa). Residues histidine 161, cysteine 196, glutamate 198, cysteine 200, histidine 204, and methionine 207 each coordinate Cu cation. Glutamate 198 contributes to the Mg(2+) binding site. The residue at position 218 (tyrosine 218) is a Phosphotyrosine.

This sequence belongs to the cytochrome c oxidase subunit 2 family. Component of the cytochrome c oxidase (complex IV, CIV), a multisubunit enzyme composed of 14 subunits. The complex is composed of a catalytic core of 3 subunits MT-CO1, MT-CO2 and MT-CO3, encoded in the mitochondrial DNA, and 11 supernumerary subunits COX4I, COX5A, COX5B, COX6A, COX6B, COX6C, COX7A, COX7B, COX7C, COX8 and NDUFA4, which are encoded in the nuclear genome. The complex exists as a monomer or a dimer and forms supercomplexes (SCs) in the inner mitochondrial membrane with NADH-ubiquinone oxidoreductase (complex I, CI) and ubiquinol-cytochrome c oxidoreductase (cytochrome b-c1 complex, complex III, CIII), resulting in different assemblies (supercomplex SCI(1)III(2)IV(1) and megacomplex MCI(2)III(2)IV(2)). Found in a complex with TMEM177, COA6, COX18, COX20, SCO1 and SCO2. Interacts with TMEM177 in a COX20-dependent manner. Interacts with COX20. Interacts with COX16. It depends on Cu cation as a cofactor.

The protein localises to the mitochondrion inner membrane. The enzyme catalyses 4 Fe(II)-[cytochrome c] + O2 + 8 H(+)(in) = 4 Fe(III)-[cytochrome c] + 2 H2O + 4 H(+)(out). Functionally, component of the cytochrome c oxidase, the last enzyme in the mitochondrial electron transport chain which drives oxidative phosphorylation. The respiratory chain contains 3 multisubunit complexes succinate dehydrogenase (complex II, CII), ubiquinol-cytochrome c oxidoreductase (cytochrome b-c1 complex, complex III, CIII) and cytochrome c oxidase (complex IV, CIV), that cooperate to transfer electrons derived from NADH and succinate to molecular oxygen, creating an electrochemical gradient over the inner membrane that drives transmembrane transport and the ATP synthase. Cytochrome c oxidase is the component of the respiratory chain that catalyzes the reduction of oxygen to water. Electrons originating from reduced cytochrome c in the intermembrane space (IMS) are transferred via the dinuclear copper A center (CU(A)) of subunit 2 and heme A of subunit 1 to the active site in subunit 1, a binuclear center (BNC) formed by heme A3 and copper B (CU(B)). The BNC reduces molecular oxygen to 2 water molecules using 4 electrons from cytochrome c in the IMS and 4 protons from the mitochondrial matrix. The sequence is that of Cytochrome c oxidase subunit 2 (MT-CO2) from Nycticebus coucang (Slow loris).